We begin with the raw amino-acid sequence, 917 residues long: Alanine--tRNA ligase (917 aa).

His-592, His-596, Cys-694, and His-698 together coordinate Zn(2+).

Belongs to the class-II aminoacyl-tRNA synthetase family. Zn(2+) is required as a cofactor.

The protein resides in the cytoplasm. The catalysed reaction is tRNA(Ala) + L-alanine + ATP = L-alanyl-tRNA(Ala) + AMP + diphosphate. Functionally, catalyzes the attachment of alanine to tRNA(Ala) in a two-step reaction: alanine is first activated by ATP to form Ala-AMP and then transferred to the acceptor end of tRNA(Ala). Also edits incorrectly charged Ser-tRNA(Ala) and Gly-tRNA(Ala) via its editing domain. This is Alanine--tRNA ligase from Sorangium cellulosum (strain So ce56) (Polyangium cellulosum (strain So ce56)).